Reading from the N-terminus, the 386-residue chain is Histidinol-phosphate aminotransferase (386 aa).

Polar residues predominate over residues 1 to 11 (MMVRKSTASNR). A disordered region spans residues 1-22 (MMVRKSTASNRRLQDKGDEEPV). Lys248 is modified (N6-(pyridoxal phosphate)lysine).

It belongs to the class-II pyridoxal-phosphate-dependent aminotransferase family. Histidinol-phosphate aminotransferase subfamily. In terms of assembly, homodimer. Pyridoxal 5'-phosphate is required as a cofactor.

The enzyme catalyses L-histidinol phosphate + 2-oxoglutarate = 3-(imidazol-4-yl)-2-oxopropyl phosphate + L-glutamate. Its pathway is amino-acid biosynthesis; L-histidine biosynthesis; L-histidine from 5-phospho-alpha-D-ribose 1-diphosphate: step 7/9. This Moorella thermoacetica (strain ATCC 39073 / JCM 9320) protein is Histidinol-phosphate aminotransferase.